The primary structure comprises 321 residues: Iron(3+)-hydroxamate-binding protein YxeB (321 aa).

The first 20 residues, 1-20, serve as a signal peptide directing secretion; that stretch reads MKKNILLVGMLVLLLMFVSA. Cys21 is lipidated: N-palmitoyl cysteine. Cys21 is lipidated: S-diacylglycerol cysteine. The segment covering 24-33 has biased composition (low complexity); sequence TASKGSSSDS. The interval 24–48 is disordered; sequence TASKGSSSDSASEKTEMRTYKSPKG. A Fe/B12 periplasmic-binding domain is found at 58–316; the sequence is RIVTDFYAGE…IITDMLIKRA (259 aa).

It belongs to the bacterial solute-binding protein 8 family. As to quaternary structure, the complex is composed of an ATP-binding protein (FhuC), two transmembrane proteins (FhuB and FhuG) and a solute-binding protein (FhuD or YxeB).

Its subcellular location is the cell membrane. It localises to the membrane raft. Its function is as follows. Part of the ABC transporter complex FhuCBGD involved in iron(3+)-hydroxamate import. Binds the iron(3+)-hydroxamate complex and transfers it to the membrane-bound permease. Partially required for the transport of desferrioxamine. The protein is Iron(3+)-hydroxamate-binding protein YxeB (yxeB) of Bacillus subtilis (strain 168).